Here is a 186-residue protein sequence, read N- to C-terminus: Bifunctional protein PyrR (186 aa).

The PRPP-binding signature appears at valine 101–threonine 113.

It belongs to the purine/pyrimidine phosphoribosyltransferase family. PyrR subfamily.

The enzyme catalyses UMP + diphosphate = 5-phospho-alpha-D-ribose 1-diphosphate + uracil. Regulates the transcription of the pyrimidine nucleotide (pyr) operon in response to exogenous pyrimidines. In terms of biological role, also displays a weak uracil phosphoribosyltransferase activity which is not physiologically significant. The chain is Bifunctional protein PyrR from Syntrophobacter fumaroxidans (strain DSM 10017 / MPOB).